A 550-amino-acid chain; its full sequence is Leucine-rich repeat LGI family member 2 (550 aa).

The N-terminal stretch at 1–25 (MALWRGGGALGLLLLSAACLIPPSA) is a signal peptide. In terms of domain architecture, LRRNT spans 26–62 (QVRRLARCPATCSCTKESIICVGSSWVPRIVPGDISS). N-linked (GlcNAc...) asparagine glycosylation is present at asparagine 67. LRR repeat units lie at residues 83–104 (SLQL…AFAG) and 107–128 (HLEY…AFRG). The 51-residue stretch at 140 to 190 (NKFECDCKAKWLYLWLKMTNSTVSDVLCIGPPEYQEKKLNEVTSFDYECTT) folds into the LRRCT domain. N-linked (GlcNAc...) asparagine glycosylation occurs at asparagine 159. 7 EAR repeats span residues 224–266 (DFVV…EWDH), 270–312 (NFRS…KYDE), 316–363 (KFVK…KWNS), 365–408 (GFYS…QWNK), 412–455 (KFVP…RWNS), 457–499 (QFVE…QWDK), and 503–545 (QFKK…EHII). Asparagine 276 carries N-linked (GlcNAc...) asparagine glycosylation. Asparagine 407 carries an N-linked (GlcNAc...) asparagine glycan.

As to expression, brain.

The protein localises to the secreted. Required for the development of soma-targeting inhibitory GABAergic synapses made by parvalbumin-positive basket cells. In Mus musculus (Mouse), this protein is Leucine-rich repeat LGI family member 2 (Lgi2).